Reading from the N-terminus, the 473-residue chain is Dol-P-Glc:Glc(2)Man(9)GlcNAc(2)-PP-Dol alpha-1,2-glucosyltransferase (473 aa).

Topologically, residues 1–6 are cytoplasmic; sequence MAQLEG. A helical membrane pass occupies residues 7–27; that stretch reads YCFSAALSCTFLVSCLLFSAF. At 28–64 the chain is on the extracellular side; the sequence is SRALREPYMDEIFHLPQAQRYCEGHFSLSQWDPMITT. Residues 65 to 85 traverse the membrane as a helical segment; the sequence is LPGLYLVSVGVVKPAIWIFAW. Over 86 to 97 the chain is Cytoplasmic; it reads SEHVVCSIGMLR. The chain crosses the membrane as a helical span at residues 98–118; the sequence is FVNLLFSVGNFYLLYLLFHKV. Topologically, residues 119–126 are extracellular; sequence QPRNKAAS. A helical membrane pass occupies residues 127–147; sequence SIQRVLSTLTLAVFPTLYFFN. Topologically, residues 148–150 are cytoplasmic; that stretch reads FLY. The helical transmembrane segment at 151–171 threads the bilayer; the sequence is YTEAGSMFFTLFAYLMCLYGN. The Extracellular segment spans residues 172-175; the sequence is HKTS. Residues 176–196 form a helical membrane-spanning segment; that stretch reads AFLGFCGFMFRQTNIIWAVFC. Topologically, residues 197–256 are cytoplasmic; it reads AGNVIAQKLTEAWKTELQKKEDRLPPIKGPFAEFRKILQFLLAYSMSFKNLSMLFCLTWP. The helical transmembrane segment at 257-277 threads the bilayer; it reads YILLGFLFCAFVVVNGGIVIG. Residues 278-283 are Extracellular-facing; that stretch reads DRSSHE. A helical transmembrane segment spans residues 284-304; that stretch reads ACLHFPQLFYFFSFTLFFSFP. The Cytoplasmic segment spans residues 305–317; it reads HLLSPSKIKTFLS. The chain crosses the membrane as a helical span at residues 318–338; it reads LVWKHGILFLVVTLVSVFLVW. Residues 339–365 lie on the Extracellular side of the membrane; that stretch reads KFTYAHKYLLADNRHYTFYVWKRVFQR. Residues 366 to 386 traverse the membrane as a helical segment; sequence YAILKYLLVPAYIFAGWSIAD. The Cytoplasmic portion of the chain corresponds to 387 to 392; that stretch reads SLKSKP. A helical membrane pass occupies residues 393–413; the sequence is IFWNLMFFICLFIVIVPQKLL. Residues 414 to 436 lie on the Extracellular side of the membrane; the sequence is EFRYFILPYVIYRLNITLPPTSR. A helical transmembrane segment spans residues 437-457; sequence LVCELSCYAIVNFITFYIFLN. The Cytoplasmic segment spans residues 458-473; sequence KTFQWPNSQDIQRFMW.

The protein belongs to the ALG10 glucosyltransferase family. As to quaternary structure, interacts with KCNH1; may regulate KCNH1, possibly by regulating its N-glycosylation. Interacts with KCNH2; may reduce KCNH2 sensitivity to classic proarrhythmic drug blockade, possibly by regulating its N-glycosylation. As to expression, highly expressed in heart, placenta, liver, kidney and pancreas. Weakly expressed in lung, skeletal muscle and brain.

It localises to the endoplasmic reticulum membrane. The enzyme catalyses an alpha-D-Glc-(1-&gt;3)-alpha-D-Glc-(1-&gt;3)-alpha-D-Man-(1-&gt;2)-alpha-D-Man-(1-&gt;2)-alpha-D-Man-(1-&gt;3)-[alpha-D-Man-(1-&gt;2)-alpha-D-Man-(1-&gt;3)-[alpha-D-Man-(1-&gt;2)-alpha-D-Man-(1-&gt;6)]-alpha-D-Man-(1-&gt;6)]-beta-D-Man-(1-&gt;4)-beta-D-GlcNAc-(1-&gt;4)-alpha-D-GlcNAc-diphospho-di-trans,poly-cis-dolichol + a di-trans,poly-cis-dolichyl beta-D-glucosyl phosphate = a alpha-D-Glc-(1-&gt;2)-alpha-D-Glc-(1-&gt;3)-alpha-D-Glc-(1-&gt;3)-alpha-D-Man-(1-&gt;2)-alpha-D-Man-(1-&gt;2)-alpha-D-Man-(1-&gt;3)-[alpha-D-Man-(1-&gt;2)-alpha-D-Man-(1-&gt;3)-[alpha-D-Man-(1-&gt;2)-alpha-D-Man-(1-&gt;6)]-alpha-D-Man-(1-&gt;6)]-beta-D-Man-(1-&gt;4)-beta-D-GlcNAc-(1-&gt;4)-alpha-D-GlcNAc-diphospho-di-trans,poly-cis-dolichol + a di-trans,poly-cis-dolichyl phosphate + H(+). The protein operates within protein modification; protein glycosylation. Dol-P-Glc:Glc(2)Man(9)GlcNAc(2)-PP-Dol alpha-1,2-glucosyltransferase that operates in the biosynthetic pathway of dolichol-linked oligosaccharides, the glycan precursors employed in protein asparagine (N)-glycosylation. The assembly of dolichol-linked oligosaccharides begins on the cytosolic side of the endoplasmic reticulum membrane and finishes in its lumen. The sequential addition of sugars to dolichol pyrophosphate produces dolichol-linked oligosaccharides containing fourteen sugars, including two GlcNAcs, nine mannoses and three glucoses. Once assembled, the oligosaccharide is transferred from the lipid to nascent proteins by oligosaccharyltransferases. In the lumen of the endoplasmic reticulum, adds the third and last glucose residue from dolichyl phosphate glucose (Dol-P-Glc) onto the lipid-linked oligosaccharide intermediate Glc(2)Man(9)GlcNAc(2)-PP-Dol to produce Glc(3)Man(9)GlcNAc(2)-PP-Dol. The chain is Dol-P-Glc:Glc(2)Man(9)GlcNAc(2)-PP-Dol alpha-1,2-glucosyltransferase from Homo sapiens (Human).